The primary structure comprises 366 residues: Chorismate synthase (366 aa).

Residue Arg48 participates in NADP(+) binding. FMN contacts are provided by residues 125-127, 241-242, Gly285, 300-304, and Arg326; these read RSS, NA, and KPTSS.

The protein belongs to the chorismate synthase family. In terms of assembly, homotetramer. Requires FMNH2 as cofactor.

The enzyme catalyses 5-O-(1-carboxyvinyl)-3-phosphoshikimate = chorismate + phosphate. The protein operates within metabolic intermediate biosynthesis; chorismate biosynthesis; chorismate from D-erythrose 4-phosphate and phosphoenolpyruvate: step 7/7. In terms of biological role, catalyzes the anti-1,4-elimination of the C-3 phosphate and the C-6 proR hydrogen from 5-enolpyruvylshikimate-3-phosphate (EPSP) to yield chorismate, which is the branch point compound that serves as the starting substrate for the three terminal pathways of aromatic amino acid biosynthesis. This reaction introduces a second double bond into the aromatic ring system. The sequence is that of Chorismate synthase from Roseobacter denitrificans (strain ATCC 33942 / OCh 114) (Erythrobacter sp. (strain OCh 114)).